The chain runs to 190 residues: Transcription termination/antitermination protein NusG (190 aa).

Residues Gly141 to Gln165 enclose the KOW domain.

This sequence belongs to the NusG family.

Its function is as follows. Participates in transcription elongation, termination and antitermination. The polypeptide is Transcription termination/antitermination protein NusG (Deinococcus radiodurans (strain ATCC 13939 / DSM 20539 / JCM 16871 / CCUG 27074 / LMG 4051 / NBRC 15346 / NCIMB 9279 / VKM B-1422 / R1)).